A 337-amino-acid chain; its full sequence is Inositol 2-dehydrogenase (337 aa).

The protein belongs to the Gfo/Idh/MocA family. In terms of assembly, homotetramer.

It catalyses the reaction myo-inositol + NAD(+) = scyllo-inosose + NADH + H(+). In terms of biological role, involved in the oxidation of myo-inositol (MI) to 2-keto-myo-inositol (2KMI or 2-inosose). In Burkholderia vietnamiensis (strain G4 / LMG 22486) (Burkholderia cepacia (strain R1808)), this protein is Inositol 2-dehydrogenase.